The primary structure comprises 261 residues: Carnitinyl-CoA dehydratase (261 aa).

E111 (nucleophile) is an active-site residue. E131 functions as the Proton acceptor in the catalytic mechanism.

Belongs to the enoyl-CoA hydratase/isomerase family.

The enzyme catalyses (R)-carnitinyl-CoA = crotonobetainyl-CoA + H2O. Its pathway is amine and polyamine metabolism; carnitine metabolism. In terms of biological role, catalyzes the reversible dehydration of L-carnitinyl-CoA to crotonobetainyl-CoA. In Escherichia coli (strain SMS-3-5 / SECEC), this protein is Carnitinyl-CoA dehydratase.